The sequence spans 825 residues: Putative NAD(+)--arginine ADP-ribosyltransferase Mav (825 aa).

The tract at residues Ala435 to His673 is disordered. Pro residues-rich tracts occupy residues Pro443–Pro457 and Ser468–His491. A compositionally biased stretch (low complexity) spans Pro560–Gly579. Over residues Pro580–Pro589 the composition is skewed to pro residues. Low complexity predominate over residues Glu590 to Ser599. Residues Lys650–Arg825 form the TR mART core domain. Positions Gly656–Leu670 are enriched in basic and acidic residues. NAD(+) is bound by residues Thr687–Arg699, Arg730–Asn733, and Glu750. Arg730 is a catalytic residue. Active-site residues include Ser755 and Glu795. Glu795 is a binding site for NAD(+).

It belongs to the Arg-specific ADP-ribosyltransferase family.

The protein localises to the secreted. The enzyme catalyses L-arginyl-[protein] + NAD(+) = N(omega)-(ADP-D-ribosyl)-L-arginyl-[protein] + nicotinamide + H(+). Functionally, a probable mono(ADP-ribosyl)transferase, it may ADP-ribosylate Arg in target protein(s). The protein is Putative NAD(+)--arginine ADP-ribosyltransferase Mav of Mycobacterium avium (strain 104).